The sequence spans 112 residues: Nucleoid-associated protein CA_C0126 (112 aa).

Residues 93 to 102 (EEETSGEMKK) show a composition bias toward basic and acidic residues. The tract at residues 93–112 (EEETSGEMKKLTGGLNIPGL) is disordered.

The protein belongs to the YbaB/EbfC family. As to quaternary structure, homodimer.

The protein resides in the cytoplasm. Its subcellular location is the nucleoid. In terms of biological role, binds to DNA and alters its conformation. May be involved in regulation of gene expression, nucleoid organization and DNA protection. This is Nucleoid-associated protein CA_C0126 from Clostridium acetobutylicum (strain ATCC 824 / DSM 792 / JCM 1419 / IAM 19013 / LMG 5710 / NBRC 13948 / NRRL B-527 / VKM B-1787 / 2291 / W).